Here is an 839-residue protein sequence, read N- to C-terminus: Transcription regulator protein BACH2 (839 aa).

The 67-residue stretch at 37–103 folds into the BTB domain; the sequence is CDVTLIVERK…AYTAKLLLSR (67 aa). Disordered regions lie at residues 150–170 and 247–331; these read QRPQEDHGNSAGEEEEEEETM and HGTS…LDRS. A compositionally biased stretch (acidic residues) spans 161-170; that stretch reads GEEEEEEETM. Positions 247–263 are enriched in polar residues; the sequence is HGTSGFASTFSEDSPGN. A compositionally biased stretch (basic and acidic residues) spans 297-312; the sequence is TDIKDRPGDVEMDRKQ. Serine 314 carries the post-translational modification Phosphoserine. The segment covering 321–331 has biased composition (low complexity); the sequence is TPTGAACLDRS. Residues lysine 381 and lysine 420 each participate in a glycyl lysine isopeptide (Lys-Gly) (interchain with G-Cter in SUMO2) cross-link. Serine 520 is modified (phosphoserine). The tract at residues 582 to 609 is disordered; sequence QSYGTNSSDESGSFSEADSESCPVQDRG. A compositionally biased stretch (polar residues) spans 583 to 597; it reads SYGTNSSDESGSFSE. Positions 645–708 constitute a bZIP domain; that stretch reads FIHDIRRRSK…GELLDNFSCL (64 aa). The basic motif stretch occupies residues 650–666; the sequence is RRRSKNRIAAQRCRKRK. The segment at 670-677 is leucine-zipper; sequence IQNLECEI. The interval 778–813 is disordered; the sequence is PWVPSNTSENCTSGRRLEGSDPGTFSERGPPLEARS. Polar residues predominate over residues 781 to 790; sequence PSNTSENCTS. The Nuclear export signal motif lies at 819-839; sequence DFCQEMTEKCTTDEQPRKDYA.

It belongs to the bZIP family. CNC subfamily. Homodimer; disulfide-linked. Heterodimer of BACH2 and Maf-related transcription factors. The reversible disulfide bond may provide a mechanism to regulate the activity in oxidative stress responses. Post-translationally, phosphorylation at Ser-520 downstream of the PI-3K pathway promotes nuclear export. As to expression, detected in brain and spleen.

Its subcellular location is the cytoplasm. The protein localises to the nucleus. Transcriptional regulator that acts as a repressor or activator. Binds to Maf recognition elements (MARE). Plays an important role in coordinating transcription activation and repression by MAFK. Induces apoptosis in response to oxidative stress through repression of the antiapoptotic factor HMOX1. Positively regulates the nuclear import of actin. Is a key regulator of adaptive immunity, crucial for the maintenance of regulatory T-cell function and B-cell maturation. The polypeptide is Transcription regulator protein BACH2 (Bach2) (Mus musculus (Mouse)).